The following is a 485-amino-acid chain: Cysteine--tRNA ligase (485 aa).

A Zn(2+)-binding site is contributed by cysteine 27. The 'HIGH' region motif lies at 29 to 39 (ITAYDLCHIGH). Zn(2+)-binding residues include cysteine 208, histidine 233, and glutamate 237. The short motif at 265 to 269 (KMSKS) is the 'KMSKS' region element. Lysine 268 contacts ATP.

The protein belongs to the class-I aminoacyl-tRNA synthetase family. Monomer. Zn(2+) is required as a cofactor.

Its subcellular location is the cytoplasm. The catalysed reaction is tRNA(Cys) + L-cysteine + ATP = L-cysteinyl-tRNA(Cys) + AMP + diphosphate. The polypeptide is Cysteine--tRNA ligase (Solidesulfovibrio magneticus (strain ATCC 700980 / DSM 13731 / RS-1) (Desulfovibrio magneticus)).